Consider the following 366-residue polypeptide: Dof zinc finger protein DOF1.3 (366 aa).

The tract at residues 22-103 (DPYSSSSHVL…KTTELKKPDK (82 aa)) is disordered. 2 stretches are compositionally biased toward low complexity: residues 25–45 (SSSS…SLSL) and 56–69 (TDNT…NLNN). Composition is skewed to basic and acidic residues over residues 70–83 (ESKE…DQHS) and 91–103 (EEEK…KPDK). The Dof-type zinc-finger motif lies at 105 to 159 (LPCPRCNSADTKFCYYNNYNVNQPRHFCRKCQRYWTAGGSMRIVPVGSGRRKNKG). Zn(2+)-binding residues include Cys-107, Cys-110, Cys-132, and Cys-135.

It localises to the nucleus. Transcription factor that binds specifically to a 5'-AA[AG]G-3' consensus core sequence. The sequence is that of Dof zinc finger protein DOF1.3 (DOF1.3) from Arabidopsis thaliana (Mouse-ear cress).